Here is a 128-residue protein sequence, read N- to C-terminus: Large ribosomal subunit protein bL17 (128 aa).

The protein belongs to the bacterial ribosomal protein bL17 family. In terms of assembly, part of the 50S ribosomal subunit. Contacts protein L32.

The polypeptide is Large ribosomal subunit protein bL17 (Streptococcus sanguinis (strain SK36)).